Reading from the N-terminus, the 197-residue chain is Ion-translocating oxidoreductase complex subunit B (197 aa).

Residues Met1–Ser26 are hydrophobic. A 4Fe-4S domain is found at Glu32–Val90. Cys49, Cys52, Cys57, Cys73, Cys115, Cys118, Cys121, Cys125, Cys145, Cys148, Cys151, and Cys155 together coordinate [4Fe-4S] cluster. 4Fe-4S ferredoxin-type domains are found at residues Gln106–Lys135 and Gln136–Ala165.

Belongs to the 4Fe4S bacterial-type ferredoxin family. RnfB subfamily. As to quaternary structure, the complex is composed of six subunits: RnfA, RnfB, RnfC, RnfD, RnfE and RnfG. The cofactor is [4Fe-4S] cluster.

Its subcellular location is the cell inner membrane. Part of a membrane-bound complex that couples electron transfer with translocation of ions across the membrane. The chain is Ion-translocating oxidoreductase complex subunit B from Hahella chejuensis (strain KCTC 2396).